Reading from the N-terminus, the 105-residue chain is MAAKIRRNDEVIVLAGKDKGKKGKVTKVLATGKVIVEGINLVKKHQKPVPALGIQGGIVEQEAAIDVSNVAIFNAATGKADRIGFRFEDGKKVRFFKSNGETVSN.

The protein belongs to the universal ribosomal protein uL24 family. In terms of assembly, part of the 50S ribosomal subunit.

In terms of biological role, one of two assembly initiator proteins, it binds directly to the 5'-end of the 23S rRNA, where it nucleates assembly of the 50S subunit. One of the proteins that surrounds the polypeptide exit tunnel on the outside of the subunit. In Vibrio parahaemolyticus serotype O3:K6 (strain RIMD 2210633), this protein is Large ribosomal subunit protein uL24.